A 174-amino-acid chain; its full sequence is Gamma-crystallin C (174 aa).

2 consecutive Beta/gamma crystallin 'Greek key' domains span residues 2–40 and 41–83; these read GKITFYEDRGFQGRCYECSSDCPNLQTYFSRCNSIRVDS and GCWM…RLIP. Cys-23 is subject to S-methylcysteine. The interval 84–87 is connecting peptide; the sequence is HTGS. Beta/gamma crystallin 'Greek key' domains are found at residues 88-128 and 129-171; these read HRMR…HVLE and GCWV…RRVV.

The protein belongs to the beta/gamma-crystallin family.

Crystallins are the dominant structural components of the vertebrate eye lens. This is Gamma-crystallin C (Crygc) from Rattus norvegicus (Rat).